A 158-amino-acid chain; its full sequence is NAD(P)H-quinone oxidoreductase subunit J, chloroplastic (158 aa).

Belongs to the complex I 30 kDa subunit family. As to quaternary structure, NDH is composed of at least 16 different subunits, 5 of which are encoded in the nucleus.

It is found in the plastid. Its subcellular location is the chloroplast thylakoid membrane. The enzyme catalyses a plastoquinone + NADH + (n+1) H(+)(in) = a plastoquinol + NAD(+) + n H(+)(out). The catalysed reaction is a plastoquinone + NADPH + (n+1) H(+)(in) = a plastoquinol + NADP(+) + n H(+)(out). Functionally, NDH shuttles electrons from NAD(P)H:plastoquinone, via FMN and iron-sulfur (Fe-S) centers, to quinones in the photosynthetic chain and possibly in a chloroplast respiratory chain. The immediate electron acceptor for the enzyme in this species is believed to be plastoquinone. Couples the redox reaction to proton translocation, and thus conserves the redox energy in a proton gradient. This Spinacia oleracea (Spinach) protein is NAD(P)H-quinone oxidoreductase subunit J, chloroplastic.